The chain runs to 110 residues: Coiled-coil-helix-coiled-coil-helix domain-containing protein 5 (110 aa).

M1 bears the N-acetylmethionine mark. CHCH domains follow at residues 9–52 (ARYC…PIIR) and 55–97 (RQAC…QPPS). Short sequence motifs (cx9C motif) lie at residues 12 to 22 (CSRELDQYGQC), 34 to 44 (CHHLKMSIARC), 58 to 68 (CAEPFEAFEKC), and 79 to 89 (CAEHMRRFLQC). Cystine bridges form between C12–C44, C22–C34, C58–C89, and C68–C79.

As to quaternary structure, monomer.

The protein resides in the mitochondrion intermembrane space. In Mus musculus (Mouse), this protein is Coiled-coil-helix-coiled-coil-helix domain-containing protein 5 (Chchd5).